Consider the following 884-residue polypeptide: MLKLWKVVRPARQLELHRLILLLIAFSLGSMGFLAYYVSTSPKAKEPLPLPLGDCSSSGAAGGPGPVRPPVPPRPPRPPETARTEPVVLVFVESAYSQLGQEIVAILESSRFRYSTELAPGRGDMPTLTDHTRGRYVLVIYENLLKYVNLDAWSRELLDRYCVEYGVGIIGFFRAHEHSLLSAQLKGFPLFLHSNLGLRDYQVNPTAPLLHLTRPSRLEPGPLPGDDWTIFQSNHRTYEPVLLGSLRPAEPPVPGPVARRARLPTVVQDLGVHDGIQRVLFGHGLSFWLHKLVFRDAGGYLTGKGLLWDLDRYILVDIDDIFVGKEGTRMKVADVEALLTTQNKLRTLVPNFTFNLGFSGKFYHTGTEEEDAGDDMLLNHRREFWWFPHMWSHMQPHLFHNRSVLADQMRLNKQFALEHGIPTDLGYAVAPHHSGVYPIHTQLYEAWKSVWGIQVTSTEEYPHLRPARYRRGFIHNGIMVLPRQTCGLFTHTIFYNEYPGGSRELDRSIRGGELFLTVLLNPISIFMTHLSNYGNDRLGLYTFESLVRFLQCWTSLRLQTLPPVPLGRKYFDLFPQERSPLWQNPCDDKRHKDIWSKEKTCDRLPKFLIVGPQKTGTTAIHFFLSLHPAVTSSFPSPSTFEEIQFFNGPNYHKGIDWYMDFFPVPSNASTDFLFEKSATYFDSEVVPRRGAALLPRAKIITVLTNPADRAYSWYQHQRAHGDPVALNYTFYQVITASSQDPPALRSLQNRCLVPGYYSTHLQRWLTYYPSGQLLIVDGQELRTNPAASMEIIQKFLGITPFLNYTRTLRFDEDKGFWCQGLEGGKTRCLGKSKGRKYPDMDAESRLFLTDFFRNHNLELSKLLSRLGQPVPSWLREELQHSSSG.

The Cytoplasmic segment spans residues 1–18 (MLKLWKVVRPARQLELHR). A helical; Signal-anchor for type II membrane protein transmembrane segment spans residues 19–39 (LILLLIAFSLGSMGFLAYYVS). The Lumenal segment spans residues 40–884 (TSPKAKEPLP…REELQHSSSG (845 aa)). The interval 41 to 598 (SPKAKEPLPL…KRHKDIWSKE (558 aa)) is heparan sulfate N-deacetylase 2. The tract at residues 49-82 (PLPLGDCSSSGAAGGPGPVRPPVPPRPPRPPETA) is disordered. Positions 66 to 79 (PVRPPVPPRPPRPP) are enriched in pro residues. N-linked (GlcNAc...) asparagine glycosylation is found at N351 and N401. The interval 599-884 (KTCDRLPKFL…REELQHSSSG (286 aa)) is heparan sulfate N-sulfotransferase 2. The For sulfotransferase activity role is filled by K614. Residue 614-618 (KTGTT) participates in 3'-phosphoadenylyl sulfate binding. N-linked (GlcNAc...) asparagine glycosylation occurs at N667. S712 contributes to the 3'-phosphoadenylyl sulfate binding site. 2 N-linked (GlcNAc...) asparagine glycosylation sites follow: N727 and N803. The cysteines at positions 818 and 828 are disulfide-linked. Residue 833–837 (KGRKY) participates in 3'-phosphoadenylyl sulfate binding.

It belongs to the sulfotransferase 1 family. NDST subfamily. Monomer.

The protein resides in the golgi apparatus membrane. It carries out the reaction alpha-D-glucosaminyl-[heparan sulfate](n) + 3'-phosphoadenylyl sulfate = N-sulfo-alpha-D-glucosaminyl-[heparan sulfate](n) + adenosine 3',5'-bisphosphate + 2 H(+). The protein operates within glycan metabolism; heparan sulfate biosynthesis. It functions in the pathway glycan metabolism; heparin biosynthesis. Its function is as follows. Essential bifunctional enzyme that catalyzes both the N-deacetylation and the N-sulfation of glucosamine (GlcNAc) of the glycosaminoglycan in heparan sulfate. Modifies the GlcNAc-GlcA disaccharide repeating sugar backbone to make N-sulfated heparosan, a prerequisite substrate for later modifications in heparin biosynthesis. Plays a role in determining the extent and pattern of sulfation of heparan sulfate. Required for the exosomal release of SDCBP, CD63 and syndecan. In Bos taurus (Bovine), this protein is Bifunctional heparan sulfate N-deacetylase/N-sulfotransferase 2 (NDST2).